The primary structure comprises 474 residues: Peroxisome proliferator-activated receptor alpha (474 aa).

Positions 106–180 (NLECRVCSDK…VGMSHNAIRF (75 aa)) form a DNA-binding region, nuclear receptor. NR C4-type zinc fingers lie at residues 109–129 (CRVC…CEGC) and 146–168 (CERM…FEKC). The NR LBD domain occupies 245-472 (FVIHDMETLC…HPLLQEIYRD (228 aa)).

It belongs to the nuclear hormone receptor family. NR1 subfamily. Heterodimer with the retinoid X receptor. Ubiquitous.

The protein resides in the nucleus. Its function is as follows. Ligand-activated transcription factor. Key regulator of lipid metabolism. Activated by lipids. Receptor for peroxisome proliferators such as hypolipidemic drugs and fatty acids. Once activated by a ligand, the receptor binds to promoter elements of target genes. Regulates the peroxisomal beta-oxidation pathway of fatty acids. This is Peroxisome proliferator-activated receptor alpha (ppara) from Xenopus laevis (African clawed frog).